Consider the following 77-residue polypeptide: Small ribosomal subunit protein bS21 (77 aa).

Residues Arg-55–Arg-77 are disordered.

It belongs to the bacterial ribosomal protein bS21 family.

The polypeptide is Small ribosomal subunit protein bS21 (Bartonella quintana (strain Toulouse) (Rochalimaea quintana)).